The following is an 857-amino-acid chain: Major vault protein (857 aa).

8 MVP repeats span residues 18 to 60 (PYYY…ITIP), 62 to 122 (RHYC…KVVQ), 123 to 174 (ANAA…TIIR), 175 to 227 (PNQA…YVLT), 228 to 282 (EKNA…NTLT), 284 to 332 (RQYC…FILG), 333 to 387 (EDEG…IPLD), and 388 to 441 (ENEG…VAER). The segment at 434–453 (AKDPVAERSDRRGDRAAPRA) is disordered. Positions 437-453 (PVAERSDRRGDRAAPRA) are enriched in basic and acidic residues. In terms of domain architecture, IQ spans 665-694 (ARHEAERLEQEARGRLERQKIMDEAEAEKS).

In terms of assembly, the vault ribonucleoprotein particle is a huge (400 A x 670 A) cage structure of 12.9 MDa. It consists of a dimer of half-vaults, with each half-vault comprising 39 identical major vault protein (MVP) chains, PARP4 and one or more vault RNAs (vRNAs). As to expression, expressed in embryos, tube feet and coelomocytes (at protein level). Not expressed in sperm cells (at protein level).

The protein localises to the cytoplasm. The protein resides in the nucleus. Its function is as follows. Required for normal vault structure. Vaults are multi-subunit structures that may act as scaffolds for proteins involved in signal transduction. Vaults may also play a role in nucleo-cytoplasmic transport. In Strongylocentrotus purpuratus (Purple sea urchin), this protein is Major vault protein.